The primary structure comprises 496 residues: GTPase Der (496 aa).

EngA-type G domains are found at residues 3 to 166 and 209 to 382; these read PVIA…VGKF and VKLA…TCAT. Residues 9 to 16, 56 to 60, 118 to 121, 215 to 222, 262 to 266, and 327 to 330 each bind GTP; these read GRPNVGKS, DTGGI, NKTD, DTAGV, and NKWD. The 85-residue stretch at 383 to 467 folds into the KH-like domain; sequence RRVGTSMLTR…PIRIQFKEGE (85 aa).

It belongs to the TRAFAC class TrmE-Era-EngA-EngB-Septin-like GTPase superfamily. EngA (Der) GTPase family. Associates with the 50S ribosomal subunit.

GTPase that plays an essential role in the late steps of ribosome biogenesis. This Proteus mirabilis (strain HI4320) protein is GTPase Der.